A 931-amino-acid chain; its full sequence is MEGDAPQRVSERVSGPGPGGGGGGMIRELCRGFGRHRRYLGQLRQNLRETQKFFRDIKCSHSHSCPSSPAGGGAAELGPAGDVAEAPLPAGQLSCIAFPPKEEKYLQQIVDCLPCILILGQDCNVKCQLLNLLLGVQVLPTTRLGSEENCKLRRLRFTYGTQTRVSLALPGQYELVHTLVAHQGNWDTIPEEDLEVQEDSEDAAHVLAELEVTMHHALLQDVDIVVAPCQGLRPAVDVLGDLVNDFLPVITYALHKDELSERDEQELQEIRKYFSFPIFFFKVPKLGSEIIASSTRRTENERSPLHHQLMDLGYLSSSHCNCGVPGQDTKAQSMLVEQSEKLRHLSTFSHQVLQTHLVDAAKALNRVHCHCLDIFINQAFDMQRDLQITPKRLEYTRKKENELYESLMNIANRKQEEMKDMICETLNTMKGELLDDAANMEFKDVIVPENGEAVGTRELKCCIRQIQELIISRLNQAVANKLISSVDYLRESFVGTLERCLQSLEKSQDVSIHITSNYLKQILNAAYHVEVTFHSGSSVTRMLWEQIKQIIQRITWVNPPTITLEWKRKVAQEAIDSLSASKLAKSICSQFRTRLNSSHEAFAASLRQLEAGHSGRLENTEDLWLKVRKDHAPRLARLSLESRSLQDVLLHRKPKLGQELGRGQYGVVYLCDNWGGHFPCALKSVVPPDEKHWNDLALEFHYMRSLPKHERLVDLHGSVIDYNYGGGSSIAVLLIMERLHRDLYTGLKAGLTLETRLQIALDVVEGIRFLHSQGLVHRDIKLKNVLLDKQNRAKITDLGFCKPEAMMSGSIVGTPIHMAPELFTGKYDNSVDVYAFGILFWYICSGSVKLPEAFERCASKDHLWNNVRRGARPERLPVFDEECWQLMEACWDGDPSQRPLLGIVQPMLQGIMERLCKSNSERPNTGLDDST.

The segment at M1–G24 is disordered. A coiled-coil region spans residues R397 to E424. The Protein kinase domain maps to P654–L908. ATP is bound by residues L660 to V668 and K683. D779 functions as the Proton acceptor in the catalytic mechanism.

The protein belongs to the protein kinase superfamily. Ser/Thr protein kinase family.

The protein localises to the cytoplasm. The protein resides in the cell membrane. It localises to the apical cell membrane. Its subcellular location is the basolateral cell membrane. It is found in the cell junction. It catalyses the reaction L-seryl-[protein] + ATP = O-phospho-L-seryl-[protein] + ADP + H(+). The catalysed reaction is L-threonyl-[protein] + ATP = O-phospho-L-threonyl-[protein] + ADP + H(+). The enzyme catalyses L-tyrosyl-[protein] + ATP = O-phospho-L-tyrosyl-[protein] + ADP + H(+). Its function is as follows. Acts as a positive regulator of ERK phosphorylation downstream of fibroblast growth factor-receptor activation. Involved in the regulation of both caspase-dependent apoptosis and caspase-independent cell death. In the skin, it plays a predominant role in suppressing caspase-dependent apoptosis in response to UV stress in a range of dermal cell types. In Canis lupus familiaris (Dog), this protein is Dual serine/threonine and tyrosine protein kinase (DSTYK).